The sequence spans 587 residues: Solute carrier family 13 member 2 (587 aa).

4 helical membrane passes run 13 to 33, 53 to 73, 86 to 106, and 136 to 156; these read FYLI…IVQT, ALPL…MGIM, TNIL…WNLH, and SMWI…HAVL. The segment at 188–208 is disordered; that stretch reads KLDNGQPVSAPSEPRTQKTQE. 8 helical membrane passes run 264–284, 329–349, 367–387, 407–427, 445–465, 477–497, 506–526, and 535–555; these read FAFP…QVLF, VLFV…FPGW, TVAI…PGLM, TVND…FALA, PLQH…IAIF, LFLP…LYVM, LAFM…FGGL, and GFLL…SWSI.

The protein belongs to the SLC13A/DASS transporter (TC 2.A.47) family. NADC subfamily. Expressed in large and small intestine and in the kidney proximal tubules.

Its subcellular location is the apical cell membrane. It carries out the reaction succinate(out) + 3 Na(+)(out) = succinate(in) + 3 Na(+)(in). The enzyme catalyses fumarate(out) + 3 Na(+)(out) = fumarate(in) + 3 Na(+)(in). It catalyses the reaction 2-oxoglutarate(out) + 3 Na(+)(out) = 2-oxoglutarate(in) + 3 Na(+)(in). Li(+) decreases succinate transport in the presence of Na(+), by competing at one of the three cation binding sites. In terms of biological role, low-affinity sodium-dicarboxylate cotransporter, that mediates the entry of citric acid cycle intermediates, such as succinate, citrate, fumarate and alpha-ketoglutarate (2-oxoglutarate) into the small intestine and renal proximal tubule. Transports the dicarboxylate into the cell with a probable stoichiometry of 3 Na(+) for 1 divalent dicarboxylate, rendering the process electrogenic. Citrate is transported in protonated form as a divalent anion, rather than the trivalent form which is normally found in blood. Has a critical role in renal dicarboxylate transport. This Rattus norvegicus (Rat) protein is Solute carrier family 13 member 2 (Slc13a2).